The sequence spans 445 residues: Histamine H3 receptor (445 aa).

Over Met1–Ala39 the chain is Extracellular. N-linked (GlcNAc...) asparagine glycosylation occurs at Asn11. Residues Leu40–Val60 traverse the membrane as a helical segment. The Cytoplasmic segment spans residues Ala61–Asn70. A helical transmembrane segment spans residues Phe71–Tyr91. Residues Val92–Lys108 lie on the Extracellular side of the membrane. An intrachain disulfide couples Cys107 to Cys188. The helical transmembrane segment at Leu109–Ser129 threads the bilayer. Over Tyr130–Met156 the chain is Cytoplasmic. Residues Ala157–Leu177 form a helical membrane-spanning segment. Topologically, residues Ser178 to Trp196 are extracellular. The helical transmembrane segment at Tyr197–Phe217 threads the bilayer. The Cytoplasmic segment spans residues Asn218–Ser359. Disordered regions lie at residues Asp234 to Trp259 and Ala286 to Arg336. Residues Pro241–Pro256 show a composition bias toward pro residues. Gly residues predominate over residues Ala290–Ala299. Residues Ala300 to Arg312 show a composition bias toward low complexity. A helical transmembrane segment spans residues Leu360–Ile380. Residues Arg381–Thr396 lie on the Extracellular side of the membrane. A helical membrane pass occupies residues Ser397–Tyr417. Topologically, residues Ser418–Lys445 are cytoplasmic. Ser439 carries the post-translational modification Phosphoserine.

This sequence belongs to the G-protein coupled receptor 1 family. As to expression, expressed abundantly in brain, most notably throughout the thalamus, the ventromedial hypothalamus and the caudate nucleus. Isoform 1 is largely predominant in all tissues.

Its subcellular location is the cell membrane. Its function is as follows. The H3 subclass of histamine receptors could mediate the histamine signals in CNS and peripheral nervous system. Signals through the inhibition of adenylate cyclase and displays high constitutive activity (spontaneous activity in the absence of agonist). This is Histamine H3 receptor (Hrh3) from Rattus norvegicus (Rat).